The primary structure comprises 359 residues: Oplophorus-luciferin 2-monooxygenase non-catalytic subunit (359 aa).

Residues 1–39 form the signal peptide; that stretch reads MAVNFKFSLLTITIVVNILVYCNASAIKFDVDLEKVPSN. LRR repeat units follow at residues 135–158, 160–180, 181–203, 228–251, 255–278, 280–300, 302–325, and 331–356; these read AATLEKLVLLKNDLSSFPFEEMSQ, TKLNWLELSVNSITGWPALSS, DTLANLILFRNPIGNIPVDAFQT, SPKLQKLVLGYNGLTSLPVGAIKL, GPTTSNLGITNNQIISFPEGAVEG, QGILGIDFNRVTSLSEEVWRP, LENLFQFSLLNNPLACVCDVMWLI, and LAKIKGNPRCAGGKRLKNLDPAVFHA.

As to quaternary structure, heterotetramer of a catalytic 19 kDa and a non-catalytic 35 kDa subunit.

The protein localises to the secreted. Functionally, non-catalytic subunit of oplophorus-luciferin 2-monooxygenase. May stabilize the active conformation of the catalytic subunit. This chain is Oplophorus-luciferin 2-monooxygenase non-catalytic subunit, found in Oplophorus gracilirostris (Luminous shrimp).